Consider the following 358-residue polypeptide: Probable tartrate dehydrogenase/decarboxylase TtuC' (358 aa).

Positions 222, 246, and 250 each coordinate Mn(2+).

Belongs to the isocitrate and isopropylmalate dehydrogenases family. The cofactor is Mg(2+). It depends on Mn(2+) as a cofactor. K(+) is required as a cofactor.

The protein localises to the cytoplasm. It carries out the reaction tartrate + NAD(+) = 2-hydroxy-3-oxosuccinate + NADH + H(+). The catalysed reaction is (2R,3S)-tartrate + NAD(+) = 2-hydroxy-3-oxosuccinate + NADH + H(+). The enzyme catalyses (2R,3R)-tartrate + NAD(+) = 2-hydroxy-3-oxosuccinate + NADH + H(+). It catalyses the reaction (2R,3R)-tartrate + H(+) = (R)-glycerate + CO2. It carries out the reaction (R)-malate + NAD(+) = pyruvate + CO2 + NADH. It participates in carbohydrate acid metabolism; tartrate degradation; 2-hydroxy-3-oxosuccinate from L-tartrate: step 1/1. It functions in the pathway carbohydrate acid metabolism; tartrate degradation; 2-hydroxy-3-oxosuccinate from meso-tartrate: step 1/1. Its pathway is carbohydrate acid metabolism; tartrate degradation; D-glycerate from L-tartrate: step 1/1. Has multiple catalytic activities. Apart from catalyzing the oxidation of (+)-tartrate to oxaloglycolate, also converts meso-tartrate to D-glycerate and catalyzes the oxidative decarboxylation of D-malate to pyruvate. This Agrobacterium vitis (Rhizobium vitis) protein is Probable tartrate dehydrogenase/decarboxylase TtuC' (ttuC').